We begin with the raw amino-acid sequence, 98 residues long: Large ribosomal subunit protein uL23 (98 aa).

It belongs to the universal ribosomal protein uL23 family. As to quaternary structure, part of the 50S ribosomal subunit. Contacts protein L29, and trigger factor when it is bound to the ribosome.

In terms of biological role, one of the early assembly proteins it binds 23S rRNA. One of the proteins that surrounds the polypeptide exit tunnel on the outside of the ribosome. Forms the main docking site for trigger factor binding to the ribosome. This chain is Large ribosomal subunit protein uL23, found in Frankia casuarinae (strain DSM 45818 / CECT 9043 / HFP020203 / CcI3).